A 318-amino-acid chain; its full sequence is Acetyl-coenzyme A carboxylase carboxyl transferase subunit alpha (318 aa).

Positions 32 to 293 (NLSDELERLR…KERLVSQLDR (262 aa)) constitute a CoA carboxyltransferase C-terminal domain.

It belongs to the AccA family. In terms of assembly, acetyl-CoA carboxylase is a heterohexamer composed of biotin carboxyl carrier protein (AccB), biotin carboxylase (AccC) and two subunits each of ACCase subunit alpha (AccA) and ACCase subunit beta (AccD).

It localises to the cytoplasm. It catalyses the reaction N(6)-carboxybiotinyl-L-lysyl-[protein] + acetyl-CoA = N(6)-biotinyl-L-lysyl-[protein] + malonyl-CoA. The protein operates within lipid metabolism; malonyl-CoA biosynthesis; malonyl-CoA from acetyl-CoA: step 1/1. In terms of biological role, component of the acetyl coenzyme A carboxylase (ACC) complex. First, biotin carboxylase catalyzes the carboxylation of biotin on its carrier protein (BCCP) and then the CO(2) group is transferred by the carboxyltransferase to acetyl-CoA to form malonyl-CoA. This chain is Acetyl-coenzyme A carboxylase carboxyl transferase subunit alpha, found in Saccharophagus degradans (strain 2-40 / ATCC 43961 / DSM 17024).